Reading from the N-terminus, the 147-residue chain is Small ribosomal subunit protein uS12 (147 aa).

This sequence belongs to the universal ribosomal protein uS12 family. As to quaternary structure, part of the 30S ribosomal subunit.

Functionally, with S4 and S5 plays an important role in translational accuracy. Located at the interface of the 30S and 50S subunits. The chain is Small ribosomal subunit protein uS12 from Thermofilum pendens (strain DSM 2475 / Hrk 5).